We begin with the raw amino-acid sequence, 868 residues long: Envelope glycoprotein gp160 (868 aa).

Positions 1–33 (MAMRAKGIRKNCQHLWRWGTMLLGMLMICSAAA) are cleaved as a signal peptide. At 34–696 (NLWVTVYYGV…ITKWLWYIKI (663 aa)) the chain is on the extracellular side. C55 and C75 form a disulfide bridge. 21 N-linked (GlcNAc...) asparagine; by host glycosylation sites follow: N89, N131, N138, N139, N142, N162, N166, N195, N198, N208, N245, N252, N273, N287, N300, N306, N312, N342, N349, N365, and N371. 5 cysteine pairs are disulfide-bonded: C120-C216, C127-C207, C132-C163, C229-C258, and C239-C250. Residues 132-162 (CTDLNTNNTTNTTELSIIVVWEQRGKGEMRN) form a V1 region. Residues 163-207 (CSFNITTSIRDKVQREYALFYKLDVEPIDDNKNTTNNTKYRLINC) form a V2 region. Positions 307-340 (CTRPNNHTRKRVTLGPGRVWYTTGEILGNIRQAH) are V3. A disulfide bridge connects residues C307 and C341. A CD4-binding loop region spans residues 373–383 (SSGGDPEIVMH). Cystine bridges form between C387–C456 and C394–C429. The V4 stretch occupies residues 394-429 (CNSTQLFNSAWNVTSNGTWSVTRKQKDTGDIITLPC). 5 N-linked (GlcNAc...) asparagine; by host glycosylation sites follow: N395, N405, N409, N459, and N473. V5 regions lie at residues 472–482 (ENQTTEIFRPG) and 474–482 (QTTEIFRPG). Residues 523–544 (AVGMLGAMFLGFLGAAGSTMGA) form a fusion peptide region. The tract at residues 586–604 (KQLQARILAVERYLKDQQL) is immunosuppression. A disulfide bond links C610 and C616. Residues N623, N628, N637, and N649 are each glycosylated (N-linked (GlcNAc...) asparagine; by host). Positions 645–679 (REIDNYTHLIYTLIEESQNQQEKNQQELLQLDKWA) form a coiled coil. Residues 674-695 (QLDKWASLWTWSDITKWLWYIK) form an MPER; binding to GalCer region. Residues 697–717 (FIMIVGGLIGLRIVFAVLSIV) traverse the membrane as a helical segment. Residues 718–868 (NRVRQGYSPL…IRQGFERALL (151 aa)) lie on the Cytoplasmic side of the membrane. Positions 724–727 (YSPL) match the YXXL motif; contains endocytosis signal motif. The tract at residues 731–755 (TLLPNPRGPDRPEGTEEGGGERGRD) is disordered. Basic and acidic residues predominate over residues 738-755 (GPDRPEGTEEGGGERGRD). A lipid anchor (S-palmitoyl cysteine; by host) is attached at C776. Residues 867 to 868 (LL) carry the Di-leucine internalization motif motif.

The protein belongs to the HIV-1 env protein family. In terms of assembly, the mature envelope protein (Env) consists of a homotrimer of non-covalently associated gp120-gp41 heterodimers. The resulting complex protrudes from the virus surface as a spike. There seems to be as few as 10 spikes on the average virion. Interacts with host CD4, CCR5 and CXCR4. Gp120 also interacts with the C-type lectins CD209/DC-SIGN and CLEC4M/DC-SIGNR (collectively referred to as DC-SIGN(R)). Gp120 and gp41 interact with GalCer. Gp120 interacts with host ITGA4/ITGB7 complex; on CD4+ T-cells, this interaction results in rapid activation of integrin ITGAL/LFA-1, which facilitates efficient cell-to-cell spreading of HIV-1. Gp120 interacts with cell-associated heparan sulfate; this interaction increases virus infectivity on permissive cells and may be involved in infection of CD4- cells. As to quaternary structure, the mature envelope protein (Env) consists of a homotrimer of non-covalently associated gp120-gp41 heterodimers. The resulting complex protrudes from the virus surface as a spike. There seems to be as few as 10 spikes on the average virion. In terms of processing, highly glycosylated by host. The high number of glycan on the protein is reffered to as 'glycan shield' because it contributes to hide protein sequence from adaptive immune system. Post-translationally, palmitoylation of the transmembrane protein and of Env polyprotein (prior to its proteolytic cleavage) is essential for their association with host cell membrane lipid rafts. Palmitoylation is therefore required for envelope trafficking to classical lipid rafts, but not for viral replication. Specific enzymatic cleavages in vivo yield mature proteins. Envelope glycoproteins are synthesized as an inactive precursor that is heavily N-glycosylated and processed likely by host cell furin in the Golgi to yield the mature SU and TM proteins. The cleavage site between SU and TM requires the minimal sequence [KR]-X-[KR]-R. About 2 of the 9 disulfide bonds of gp41 are reduced by P4HB/PDI, following binding to CD4 receptor.

It localises to the virion membrane. The protein resides in the host cell membrane. Its subcellular location is the host endosome membrane. In terms of biological role, oligomerizes in the host endoplasmic reticulum into predominantly trimers. In a second time, gp160 transits in the host Golgi, where glycosylation is completed. The precursor is then proteolytically cleaved in the trans-Golgi and thereby activated by cellular furin or furin-like proteases to produce gp120 and gp41. Functionally, attaches the virus to the host lymphoid cell by binding to the primary receptor CD4. This interaction induces a structural rearrangement creating a high affinity binding site for a chemokine coreceptor like CXCR4 and/or CCR5. Acts as a ligand for CD209/DC-SIGN and CLEC4M/DC-SIGNR, which are respectively found on dendritic cells (DCs), and on endothelial cells of liver sinusoids and lymph node sinuses. These interactions allow capture of viral particles at mucosal surfaces by these cells and subsequent transmission to permissive cells. HIV subverts the migration properties of dendritic cells to gain access to CD4+ T-cells in lymph nodes. Virus transmission to permissive T-cells occurs either in trans (without DCs infection, through viral capture and transmission), or in cis (following DCs productive infection, through the usual CD4-gp120 interaction), thereby inducing a robust infection. In trans infection, bound virions remain infectious over days and it is proposed that they are not degraded, but protected in non-lysosomal acidic organelles within the DCs close to the cell membrane thus contributing to the viral infectious potential during DCs' migration from the periphery to the lymphoid tissues. On arrival at lymphoid tissues, intact virions recycle back to DCs' cell surface allowing virus transmission to CD4+ T-cells. Acts as a class I viral fusion protein. Under the current model, the protein has at least 3 conformational states: pre-fusion native state, pre-hairpin intermediate state, and post-fusion hairpin state. During fusion of viral and target intracellular membranes, the coiled coil regions (heptad repeats) assume a trimer-of-hairpins structure, positioning the fusion peptide in close proximity to the C-terminal region of the ectodomain. The formation of this structure appears to drive apposition and subsequent fusion of viral and target cell membranes. Complete fusion occurs in host cell endosomes and is dynamin-dependent, however some lipid transfer might occur at the plasma membrane. The virus undergoes clathrin-dependent internalization long before endosomal fusion, thus minimizing the surface exposure of conserved viral epitopes during fusion and reducing the efficacy of inhibitors targeting these epitopes. Membranes fusion leads to delivery of the nucleocapsid into the cytoplasm. The sequence is that of Envelope glycoprotein gp160 from Human immunodeficiency virus type 1 group M subtype B (isolate CDC-451) (HIV-1).